An 860-amino-acid polypeptide reads, in one-letter code: Spindle and centriole-associated protein 1 (860 aa).

Disordered regions lie at residues R127–Q150, D172–R201, A230–Q250, and P294–S332. 3 stretches are compositionally biased toward polar residues: residues P139–Q150, E190–N200, and A230–L245. T236 carries the phosphothreonine modification. Phosphoserine is present on S240. Over residues S317 to T329 the composition is skewed to low complexity. Residues R383 to V439 adopt a coiled-coil conformation. The interval P623 to P645 is disordered. Over residues S627–P642 the composition is skewed to low complexity. S648 bears the Phosphoserine mark. Positions I693–T718 are disordered. Positions S729–K757 form a coiled coil. 4 positions are modified to phosphoserine: S765, S766, S769, and S824. The interval G792–P860 is disordered. The span at V804–S824 shows a compositional bias: low complexity.

Interacts with CEP120.

The protein resides in the cytoplasm. It is found in the cytoskeleton. It localises to the microtubule organizing center. The protein localises to the centrosome. Its subcellular location is the centriole. The protein resides in the spindle. Its function is as follows. Regulator required for centriole duplication, for proper bipolar spindle formation and chromosome congression in mitosis. The sequence is that of Spindle and centriole-associated protein 1 (Spice1) from Mus musculus (Mouse).